Here is a 456-residue protein sequence, read N- to C-terminus: Frizzled/smoothened-like sans CRD protein F (456 aa).

The signal sequence occupies residues 1–30; it reads MIFNNLKNQNKIINFLIIFYFLSFLKQIES. The Extracellular segment spans residues 31–92; that stretch reads QSINITSSSS…PFFTINEWNK (62 aa). N-linked (GlcNAc...) asparagine glycans are attached at residues Asn34, Asn52, and Asn70. A helical transmembrane segment spans residues 93–113; it reads FLNMSLVMGTISFFSGLFLLV. The Cytoplasmic segment spans residues 114–127; that stretch reads TYSPIVNKTHNRHT. A helical transmembrane segment spans residues 128–148; it reads IGVMCMSFGVCLAMCSDMWNF. Topologically, residues 149 to 174 are extracellular; the sequence is GSNFTEKSICPSPGQYLSTSNARCLS. N-linked (GlcNAc...) asparagine glycosylation occurs at Asn151. The helical transmembrane segment at 175 to 195 threads the bilayer; that stretch reads SGIFLQFGGVFGFLNWTLLSF. The Cytoplasmic portion of the chain corresponds to 196–211; it reads DLFMNIKGIITKNYDK. Residues 212 to 232 form a helical membrane-spanning segment; the sequence is YYVSGTFIIAIIFTFVPIVND. Over 233–252 the chain is Extracellular; that stretch reads QYSMSYIGLGCWLGSAMYQL. Residues 253–273 form a helical membrane-spanning segment; that stretch reads IFFWILLSICLIVSSVFIILI. The Cytoplasmic portion of the chain corresponds to 274–297; that stretch reads LKEVYIIIKLSKQKTSLKGNIRPL. Residues 298-318 form a helical membrane-spanning segment; it reads ICISITGFAFFYMFFYYISIV. At 319 to 354 the chain is on the extracellular side; it reads VEGDYYERVLNEYTDCLMDPTKDISECKSPRMSVAS. The chain crosses the membrane as a helical span at residues 355–375; sequence EFVFLLCLRLLGIGAFIFYGI. The Cytoplasmic segment spans residues 376 to 456; it reads NNKVKKIWLN…ESSLNSVDEI (81 aa). The disordered stretch occupies residues 403–422; the sequence is ADNDKSNSNGSKVLYRTNNT.

The protein belongs to the G-protein coupled receptor Fz/Smo family.

The protein localises to the membrane. In Dictyostelium discoideum (Social amoeba), this protein is Frizzled/smoothened-like sans CRD protein F (fscF).